The chain runs to 116 residues: Large ribosomal subunit protein uL18 (116 aa).

The protein belongs to the universal ribosomal protein uL18 family. Part of the 50S ribosomal subunit; part of the 5S rRNA/L5/L18/L25 subcomplex. Contacts the 5S and 23S rRNAs.

This is one of the proteins that bind and probably mediate the attachment of the 5S RNA into the large ribosomal subunit, where it forms part of the central protuberance. This chain is Large ribosomal subunit protein uL18, found in Shewanella putrefaciens (strain CN-32 / ATCC BAA-453).